The primary structure comprises 601 residues: MNITTALPLPTHLLSEKVTAPLLGARKIYITGSRQDIRVPMREIALTPSSARYGGNENLSLALYDTSGIYTDPQATIDLACGLPRLRAAWIDERADTVEAALYFKVPESVSVTAPPFPTAPRPRRARDNVAVTQLEYARRGLVTPEMEFVAIREQQRREQTVENLRGQRHAGDAWGALVGTPITPEFVRDEIARGRAILPNNINHPESEPMIIGRNFLTKINANIGTSALSSSIAEEVEKLVWAIRWGADTIMDLSTGRDIHATREWILRNSPVPVGTVPIYQALEKVGGHVEALSWAVFRDTLIEQAEQGVDYVTVHAGVLRDFIPLTASRLTGIVSRGGSIMARWCQAHRSENFLYTHFEELCEIMRAYDVAFSLGDGLRPGCIADANDAAQFAELEILGELTHIAWNHQVQVMVEGPGHVPMHLIKANMDKQLAACGEAPFYTLGPLTTDIAPGYDHITSAIGAAMIGWYGTAMLCYVTPKEHLGLPNLQDVHDGIIAYKIAAHAADLAKGHPAAQARDDALSKARFEFRWQDQFHLSLDPEKALALHDESLPKEAHKRAAFCSMCGPQFCSMKISQEVRDASSNELSDGNTNTNDAI.

Substrate is bound by residues Asn224, Met253, Tyr282, His318, 338–340, 379–382, and Glu418; these read SRG and DGLR. Zn(2+) is bound at residue His422. Tyr445 serves as a coordination point for substrate. His486 serves as a coordination point for Zn(2+). 3 residues coordinate [4Fe-4S] cluster: Cys566, Cys569, and Cys574.

Belongs to the ThiC family. In terms of assembly, homodimer. Requires [4Fe-4S] cluster as cofactor.

It catalyses the reaction 5-amino-1-(5-phospho-beta-D-ribosyl)imidazole + S-adenosyl-L-methionine = 4-amino-2-methyl-5-(phosphooxymethyl)pyrimidine + CO + 5'-deoxyadenosine + formate + L-methionine + 3 H(+). It participates in cofactor biosynthesis; thiamine diphosphate biosynthesis. Catalyzes the synthesis of the hydroxymethylpyrimidine phosphate (HMP-P) moiety of thiamine from aminoimidazole ribotide (AIR) in a radical S-adenosyl-L-methionine (SAM)-dependent reaction. This chain is Phosphomethylpyrimidine synthase, found in Xylella fastidiosa (strain 9a5c).